Here is a 150-residue protein sequence, read N- to C-terminus: Nucleoside diphosphate kinase (150 aa).

The ATP site is built by K9, F57, R85, T91, R102, and N112. Residue H115 is the Pros-phosphohistidine intermediate of the active site.

This sequence belongs to the NDK family. As to quaternary structure, homotetramer. Mg(2+) serves as cofactor.

The protein localises to the cytoplasm. It carries out the reaction a 2'-deoxyribonucleoside 5'-diphosphate + ATP = a 2'-deoxyribonucleoside 5'-triphosphate + ADP. The catalysed reaction is a ribonucleoside 5'-diphosphate + ATP = a ribonucleoside 5'-triphosphate + ADP. Its function is as follows. Major role in the synthesis of nucleoside triphosphates other than ATP. The ATP gamma phosphate is transferred to the NDP beta phosphate via a ping-pong mechanism, using a phosphorylated active-site intermediate. This is Nucleoside diphosphate kinase from Symbiobacterium thermophilum (strain DSM 24528 / JCM 14929 / IAM 14863 / T).